The primary structure comprises 187 residues: Phospholipase A2-gamma (187 aa).

A signal peptide spans 1–25; it reads MITGLALSRVAFGLTAFLLLAVVSS. 6 cysteine pairs are disulfide-bonded: Cys-29–Cys-56, Cys-33–Cys-62, Cys-38–Cys-115, Cys-49–Cys-69, Cys-68–Cys-93, and Cys-75–Cys-86. 3 residues coordinate Ca(2+): Tyr-48, Gly-50, and Tyr-53. The active site involves His-72. Asp-73 provides a ligand contact to Ca(2+).

It belongs to the phospholipase A2 family. It depends on Ca(2+) as a cofactor. As to expression, strongly expressed in mature flowers but weakly expressed in other tissues. Detected in buds, open flowers and in pollen.

The protein localises to the secreted. It localises to the golgi apparatus. It is found in the trans-Golgi network. The protein resides in the endoplasmic reticulum. It catalyses the reaction a 1,2-diacyl-sn-glycero-3-phosphocholine + H2O = a 1-acyl-sn-glycero-3-phosphocholine + a fatty acid + H(+). Its function is as follows. PA2 catalyzes the calcium-dependent hydrolysis of the 2-acyl groups in 3-sn-phosphoglycerides. Releases lysophospholipids (LPLs) and free fatty acids (FFAs) from membrane phospholipids in response to hormones and other external stimuli. Plays a role in pollen development and germination and tube growth. This Arabidopsis thaliana (Mouse-ear cress) protein is Phospholipase A2-gamma (PLA2-GAMMA).